The chain runs to 301 residues: Ornithine carbamoyltransferase (301 aa).

Residues 46–49 (STRT), Gln73, Arg97, and 124–127 (HPCQ) each bind carbamoyl phosphate. L-ornithine is bound by residues Asn154, Asp218, and 222–223 (SM). Residues 258-259 (CL) and Arg286 each bind carbamoyl phosphate.

The protein belongs to the aspartate/ornithine carbamoyltransferase superfamily. OTCase family.

It is found in the cytoplasm. The enzyme catalyses carbamoyl phosphate + L-ornithine = L-citrulline + phosphate + H(+). It functions in the pathway amino-acid biosynthesis; L-arginine biosynthesis; L-arginine from L-ornithine and carbamoyl phosphate: step 1/3. Reversibly catalyzes the transfer of the carbamoyl group from carbamoyl phosphate (CP) to the N(epsilon) atom of ornithine (ORN) to produce L-citrulline. This Methanothermobacter thermautotrophicus (strain ATCC 29096 / DSM 1053 / JCM 10044 / NBRC 100330 / Delta H) (Methanobacterium thermoautotrophicum) protein is Ornithine carbamoyltransferase (argF).